The sequence spans 296 residues: MSDTVTKVVADLNAAILQKSARAIAEVACKYSASDREKVRAQYRSTYSIEPDDHINKMLKGGDAATIVSNCWDELPVLRAKHLSKALKGSVDHRALLDLLIMCDREDWNNTVVAFTQQFRKNLPEELEKALKSTTSYRAFYTTWIKFDRAPRNNINGDALKLKEAFSKKDEQTVFDIMSTTVESEYKAIATQFEKVAGMTMIQAFAALTSGPLYWALHTAHYRNIGMNNGAAFLIHHACTADKKGDIARMTRLSPLLCDKCLNAKNYYSEFGDMGKDIVNAFKDAVEEVLKVLWRV.

Annexin repeat units lie at residues 3–72 (DTVT…SNCW), 74–146 (ELPV…TWIK), 153–222 (NNIN…TAHY), and 226–295 (GMNN…VLWR).

The protein belongs to the annexin family. Giardin subunit alpha subfamily.

It is found in the cytoplasm. The protein localises to the cytoskeleton. Giardins are involved in parasite attachment to the intestinal mucosa and in the cytoskeletal disassembly and reassembly that marks the transition from infectious trophozoite to transmissible cyst. They may interact with other cytoskeletal proteins such as microtubules in the microribbons or crossbridges, to maintain the integrity of the ventral disk. This Giardia intestinalis (Giardia lamblia) protein is Giardin subunit alpha-3.